The sequence spans 122 residues: Small ribosomal subunit protein uS13 (122 aa).

The interval 93 to 122 is disordered; the sequence is RLSLPVRGQRTKTNSRTRKGKRKTVAGKKK. Residues 101-122 are compositionally biased toward basic residues; that stretch reads QRTKTNSRTRKGKRKTVAGKKK.

The protein belongs to the universal ribosomal protein uS13 family. As to quaternary structure, part of the 30S ribosomal subunit. Forms a loose heterodimer with protein S19. Forms two bridges to the 50S subunit in the 70S ribosome.

Its function is as follows. Located at the top of the head of the 30S subunit, it contacts several helices of the 16S rRNA. In the 70S ribosome it contacts the 23S rRNA (bridge B1a) and protein L5 of the 50S subunit (bridge B1b), connecting the 2 subunits; these bridges are implicated in subunit movement. Contacts the tRNAs in the A and P-sites. In Chlamydia pneumoniae (Chlamydophila pneumoniae), this protein is Small ribosomal subunit protein uS13.